Here is a 371-residue protein sequence, read N- to C-terminus: S-adenosylmethionine:tRNA ribosyltransferase-isomerase (371 aa).

This sequence belongs to the QueA family. In terms of assembly, monomer.

The protein resides in the cytoplasm. The enzyme catalyses 7-aminomethyl-7-carbaguanosine(34) in tRNA + S-adenosyl-L-methionine = epoxyqueuosine(34) in tRNA + adenine + L-methionine + 2 H(+). It participates in tRNA modification; tRNA-queuosine biosynthesis. Its function is as follows. Transfers and isomerizes the ribose moiety from AdoMet to the 7-aminomethyl group of 7-deazaguanine (preQ1-tRNA) to give epoxyqueuosine (oQ-tRNA). This is S-adenosylmethionine:tRNA ribosyltransferase-isomerase from Rickettsia akari (strain Hartford).